We begin with the raw amino-acid sequence, 162 residues long: MEYIAVAEVLNTHGIKGCLKMRPLTDNIERFDEDICYYLGDKKVKVTIQNYRMYKGFLYIDFEEFNDINEVLGFKKQYLYIDEKDRYELKDGSFYIDDLIGLKAYFNGEYIGDLVDVISIYSNDVYVIKNDEKEFMIPAVKEFIKKIDLENGLIDVVIIEGM.

The PRC barrel domain maps to 91–162 (DGSFYIDDLI…LIDVVIIEGM (72 aa)).

The protein belongs to the RimM family. In terms of assembly, binds ribosomal protein uS19.

It localises to the cytoplasm. Functionally, an accessory protein needed during the final step in the assembly of 30S ribosomal subunit, possibly for assembly of the head region. Essential for efficient processing of 16S rRNA. May be needed both before and after RbfA during the maturation of 16S rRNA. It has affinity for free ribosomal 30S subunits but not for 70S ribosomes. The polypeptide is Ribosome maturation factor RimM (Finegoldia magna (strain ATCC 29328 / DSM 20472 / WAL 2508) (Peptostreptococcus magnus)).